The sequence spans 690 residues: Cysteine-rich receptor-like protein kinase 21 (690 aa).

The first 24 residues, Met1–Ala24, serve as a signal peptide directing secretion. Residues Ala25–Ile129 form the Gnk2-homologous 1 domain. The Extracellular segment spans residues Ala25–Ser281. N-linked (GlcNAc...) asparagine glycosylation is found at Asn130, Asn148, Asn155, Asn220, Asn268, and Asn276. The 107-residue stretch at Ala140 to Phe246 folds into the Gnk2-homologous 2 domain. The helical transmembrane segment at Ile282–Ala302 threads the bilayer. The Cytoplasmic portion of the chain corresponds to Val303–Arg690. In terms of domain architecture, Protein kinase spans Phe363–Ile640. ATP-binding positions include Leu369 to Val377 and Lys391. Position 436 is a phosphotyrosine (Tyr436). Asp488 (proton acceptor) is an active-site residue. Residue Ser492 is modified to Phosphoserine. The residue at position 528 (Thr528) is a Phosphothreonine. Position 536 is a phosphotyrosine (Tyr536).

The protein belongs to the protein kinase superfamily. Ser/Thr protein kinase family. CRK subfamily.

The protein resides in the membrane. The catalysed reaction is L-seryl-[protein] + ATP = O-phospho-L-seryl-[protein] + ADP + H(+). It catalyses the reaction L-threonyl-[protein] + ATP = O-phospho-L-threonyl-[protein] + ADP + H(+). This is Cysteine-rich receptor-like protein kinase 21 (CRK21) from Arabidopsis thaliana (Mouse-ear cress).